The sequence spans 149 residues: 3-dehydroquinate dehydratase (149 aa).

Tyr-22 acts as the Proton acceptor in catalysis. Substrate contacts are provided by Asn-74, His-80, and Asp-87. The active-site Proton donor is His-100. Substrate-binding positions include 101–102 and Arg-111; that span reads MS.

It belongs to the type-II 3-dehydroquinase family. Homododecamer.

The catalysed reaction is 3-dehydroquinate = 3-dehydroshikimate + H2O. It participates in metabolic intermediate biosynthesis; chorismate biosynthesis; chorismate from D-erythrose 4-phosphate and phosphoenolpyruvate: step 3/7. Functionally, catalyzes a trans-dehydration via an enolate intermediate. This chain is 3-dehydroquinate dehydratase, found in Leptothrix cholodnii (strain ATCC 51168 / LMG 8142 / SP-6) (Leptothrix discophora (strain SP-6)).